The chain runs to 640 residues: Biosynthetic arginine decarboxylase (640 aa).

Residue K105 is modified to N6-(pyridoxal phosphate)lysine. 290–300 (FDVGGGLAIDY) contacts substrate.

This sequence belongs to the Orn/Lys/Arg decarboxylase class-II family. SpeA subfamily. Mg(2+) serves as cofactor. It depends on pyridoxal 5'-phosphate as a cofactor.

The enzyme catalyses L-arginine + H(+) = agmatine + CO2. Its function is as follows. Catalyzes the biosynthesis of agmatine from arginine. The chain is Biosynthetic arginine decarboxylase from Vibrio vulnificus (strain CMCP6).